A 195-amino-acid chain; its full sequence is 3-isopropylmalate dehydratase small subunit (195 aa).

It belongs to the LeuD family. LeuD type 1 subfamily. As to quaternary structure, heterodimer of LeuC and LeuD.

The catalysed reaction is (2R,3S)-3-isopropylmalate = (2S)-2-isopropylmalate. It functions in the pathway amino-acid biosynthesis; L-leucine biosynthesis; L-leucine from 3-methyl-2-oxobutanoate: step 2/4. Its function is as follows. Catalyzes the isomerization between 2-isopropylmalate and 3-isopropylmalate, via the formation of 2-isopropylmaleate. In Karelsulcia muelleri (strain GWSS) (Sulcia muelleri), this protein is 3-isopropylmalate dehydratase small subunit.